The primary structure comprises 483 residues: Aspartyl/glutamyl-tRNA(Asn/Gln) amidotransferase subunit B (483 aa).

The protein belongs to the GatB/GatE family. GatB subfamily. Heterotrimer of A, B and C subunits.

It catalyses the reaction L-glutamyl-tRNA(Gln) + L-glutamine + ATP + H2O = L-glutaminyl-tRNA(Gln) + L-glutamate + ADP + phosphate + H(+). The catalysed reaction is L-aspartyl-tRNA(Asn) + L-glutamine + ATP + H2O = L-asparaginyl-tRNA(Asn) + L-glutamate + ADP + phosphate + 2 H(+). Allows the formation of correctly charged Asn-tRNA(Asn) or Gln-tRNA(Gln) through the transamidation of misacylated Asp-tRNA(Asn) or Glu-tRNA(Gln) in organisms which lack either or both of asparaginyl-tRNA or glutaminyl-tRNA synthetases. The reaction takes place in the presence of glutamine and ATP through an activated phospho-Asp-tRNA(Asn) or phospho-Glu-tRNA(Gln). This Thermomicrobium roseum (strain ATCC 27502 / DSM 5159 / P-2) protein is Aspartyl/glutamyl-tRNA(Asn/Gln) amidotransferase subunit B.